The sequence spans 112 residues: Putative pterin-4-alpha-carbinolamine dehydratase (112 aa).

The protein belongs to the pterin-4-alpha-carbinolamine dehydratase family.

It catalyses the reaction (4aS,6R)-4a-hydroxy-L-erythro-5,6,7,8-tetrahydrobiopterin = (6R)-L-erythro-6,7-dihydrobiopterin + H2O. The polypeptide is Putative pterin-4-alpha-carbinolamine dehydratase (Photobacterium profundum (strain SS9)).